Reading from the N-terminus, the 568-residue chain is Circadian clock protein KaiC2 (568 aa).

KaiC domains follow at residues 11 to 250 (IKCP…SVSQ) and 251 to 485 (ERIS…LTGT). Phosphoserine; by autocatalysis is present on residues Ser423 and Ser424.

This sequence belongs to the KaiC family. Multimerizes, probably forming homohexamers, no interaction with KaiC1 or KaiC3 is seen.

It carries out the reaction L-seryl-[protein] + ATP = O-phospho-L-seryl-[protein] + ADP + H(+). The catalysed reaction is L-threonyl-[protein] + ATP = O-phospho-L-threonyl-[protein] + ADP + H(+). It catalyses the reaction ATP + H2O = ADP + phosphate + H(+). Autophosphorylates independently of KaiA. The sequence is that of Circadian clock protein KaiC2 from Synechocystis sp. (strain ATCC 27184 / PCC 6803 / Kazusa).